A 372-amino-acid chain; its full sequence is Peptide chain release factor 2 (372 aa).

An N5-methylglutamine modification is found at Gln253.

This sequence belongs to the prokaryotic/mitochondrial release factor family. Methylated by PrmC. Methylation increases the termination efficiency of RF2.

The protein localises to the cytoplasm. Its function is as follows. Peptide chain release factor 2 directs the termination of translation in response to the peptide chain termination codons UGA and UAA. This Nocardia farcinica (strain IFM 10152) protein is Peptide chain release factor 2.